The primary structure comprises 334 residues: ADP-L-glycero-D-manno-heptose-6-epimerase (334 aa).

Residues 11–12 (FI), 32–33 (DN), lysine 39, lysine 54, 77–81 (QGACS), and asparagine 94 contribute to the NADP(+) site. Tyrosine 141 acts as the Proton acceptor in catalysis. Lysine 145 provides a ligand contact to NADP(+). Asparagine 171 lines the substrate pocket. NADP(+) is bound by residues valine 172 and lysine 180. The active-site Proton acceptor is lysine 180. Substrate-binding positions include arginine 182, histidine 189, 203 to 206 (FGSN), arginine 216, and tyrosine 295.

The protein belongs to the NAD(P)-dependent epimerase/dehydratase family. HldD subfamily. In terms of assembly, homopentamer. The cofactor is NADP(+).

It catalyses the reaction ADP-D-glycero-beta-D-manno-heptose = ADP-L-glycero-beta-D-manno-heptose. The protein operates within nucleotide-sugar biosynthesis; ADP-L-glycero-beta-D-manno-heptose biosynthesis; ADP-L-glycero-beta-D-manno-heptose from D-glycero-beta-D-manno-heptose 7-phosphate: step 4/4. In terms of biological role, catalyzes the interconversion between ADP-D-glycero-beta-D-manno-heptose and ADP-L-glycero-beta-D-manno-heptose via an epimerization at carbon 6 of the heptose. This Neisseria meningitidis serogroup C (strain 053442) protein is ADP-L-glycero-D-manno-heptose-6-epimerase.